The following is a 442-amino-acid chain: UPF0597 protein HRM2_02820 (442 aa).

This sequence belongs to the UPF0597 family.

This is UPF0597 protein HRM2_02820 from Desulforapulum autotrophicum (strain ATCC 43914 / DSM 3382 / VKM B-1955 / HRM2) (Desulfobacterium autotrophicum).